The primary structure comprises 203 residues: ATP-dependent Clp protease proteolytic subunit (203 aa).

Serine 107 (nucleophile) is an active-site residue. The active site involves histidine 132.

It belongs to the peptidase S14 family. In terms of assembly, fourteen ClpP subunits assemble into 2 heptameric rings which stack back to back to give a disk-like structure with a central cavity, resembling the structure of eukaryotic proteasomes.

The protein localises to the cytoplasm. It carries out the reaction Hydrolysis of proteins to small peptides in the presence of ATP and magnesium. alpha-casein is the usual test substrate. In the absence of ATP, only oligopeptides shorter than five residues are hydrolyzed (such as succinyl-Leu-Tyr-|-NHMec, and Leu-Tyr-Leu-|-Tyr-Trp, in which cleavage of the -Tyr-|-Leu- and -Tyr-|-Trp bonds also occurs).. Cleaves peptides in various proteins in a process that requires ATP hydrolysis. Has a chymotrypsin-like activity. Plays a major role in the degradation of misfolded proteins. This chain is ATP-dependent Clp protease proteolytic subunit, found in Thermotoga maritima (strain ATCC 43589 / DSM 3109 / JCM 10099 / NBRC 100826 / MSB8).